The chain runs to 844 residues: Translation elongation factor 2 (844 aa).

A tr-type G domain is found at Arg-17–Val-348. Position 26–33 (Ala-26–Ser-33) interacts with GTP. Phosphothreonine is present on residues Thr-57 and Thr-59. GTP-binding positions include Asn-162–Asp-165 and Ser-219–Leu-221. Position 488 is a phosphoserine (Ser-488). His-701 is subject to Diphthamide.

The protein belongs to the TRAFAC class translation factor GTPase superfamily. Classic translation factor GTPase family. EF-G/EF-2 subfamily. Post-translationally, phosphorylation by EF-2 kinase completely inactivates EF-2.

The protein resides in the cytoplasm. It catalyses the reaction GTP + H2O = GDP + phosphate + H(+). Catalyzes the GTP-dependent ribosomal translocation step during translation elongation. During this step, the ribosome changes from the pre-translocational (PRE) to the post-translocational (POST) state as the newly formed A-site-bound peptidyl-tRNA and P-site-bound deacylated tRNA move to the P and E sites, respectively. Catalyzes the coordinated movement of the two tRNA molecules, the mRNA and conformational changes in the ribosome. The polypeptide is Translation elongation factor 2 (Bombyx mori (Silk moth)).